Here is a 488-residue protein sequence, read N- to C-terminus: Transmembrane protein 39A-B (488 aa).

Residues Asn-31 and Asn-39 are each glycosylated (N-linked (GlcNAc...) asparagine). 3 consecutive transmembrane segments (helical) span residues 72–92 (GLVFEFLFFIYLLVTLFTQYI), 110–130 (TSLNFHLIDYHLAAFITVMLA), and 155–175 (LIIGRLVLLTLCGWIFCWTTV). Asn-180 carries an N-linked (GlcNAc...) asparagine glycan. Residues 182–202 (SVLNLLFLGYPFGVYVPLCCF) form a helical membrane-spanning segment. A glycan (N-linked (GlcNAc...) asparagine) is linked at Asn-206. 4 helical membrane passes run 287 to 307 (EVLFNSLFSAYYVAFLPLCFV), 319 to 339 (CEHLIMVWINAFVMLSTQLLP), 420 to 440 (LLNLLLVIEGSLVLYQLYSLL), and 446 to 466 (NHTLSIALILFCNYYVLFKLL).

Belongs to the TMEM39 family.

It is found in the membrane. This is Transmembrane protein 39A-B (tmem39a-b) from Xenopus laevis (African clawed frog).